The primary structure comprises 200 residues: ATP-dependent Clp protease proteolytic subunit (200 aa).

Residue S97 is the Nucleophile of the active site. H122 is an active-site residue.

The protein belongs to the peptidase S14 family. In terms of assembly, fourteen ClpP subunits assemble into 2 heptameric rings which stack back to back to give a disk-like structure with a central cavity, resembling the structure of eukaryotic proteasomes.

It localises to the cytoplasm. The catalysed reaction is Hydrolysis of proteins to small peptides in the presence of ATP and magnesium. alpha-casein is the usual test substrate. In the absence of ATP, only oligopeptides shorter than five residues are hydrolyzed (such as succinyl-Leu-Tyr-|-NHMec, and Leu-Tyr-Leu-|-Tyr-Trp, in which cleavage of the -Tyr-|-Leu- and -Tyr-|-Trp bonds also occurs).. Cleaves peptides in various proteins in a process that requires ATP hydrolysis. Has a chymotrypsin-like activity. Plays a major role in the degradation of misfolded proteins. The polypeptide is ATP-dependent Clp protease proteolytic subunit (Oleidesulfovibrio alaskensis (strain ATCC BAA-1058 / DSM 17464 / G20) (Desulfovibrio alaskensis)).